The chain runs to 250 residues: Anamorsin homolog 1 (250 aa).

The segment at 1 to 104 (MNLKITINQQ…KKLNIPQQEF (104 aa)) is N-terminal SAM-like domain. The segment at 104–149 (FNNCYGKYDYIEQKFQNQINFFKQVDINGKQEIIDENELLDDGVQV) is linker. [2Fe-2S] cluster-binding residues include C155, C162, C165, and C167. The segment at 155–167 (CASKPRACANCTC) is fe-S binding site A. Positions 193, 196, 204, and 207 each coordinate [4Fe-4S] cluster. 2 consecutive short sequence motifs (cx2C motif) follow at residues 193-196 (CGSC) and 204-207 (CANC). Positions 193–207 (CGSCYLGDAFRCANC) are fe-S binding site B.

The protein belongs to the anamorsin family. As to quaternary structure, monomer. [2Fe-2S] cluster is required as a cofactor. [4Fe-4S] cluster serves as cofactor.

It is found in the cytoplasm. The protein resides in the mitochondrion intermembrane space. Component of the cytosolic iron-sulfur (Fe-S) protein assembly (CIA) machinery. Required for the maturation of extramitochondrial Fe-S proteins. Part of an electron transfer chain functioning in an early step of cytosolic Fe-S biogenesis, facilitating the de novo assembly of a [4Fe-4S] cluster on the cytosolic Fe-S scaffold complex. Electrons are transferred from NADPH via a FAD- and FMN-containing diflavin oxidoreductase. Together with the diflavin oxidoreductase, also required for the assembly of the diferric tyrosyl radical cofactor of ribonucleotide reductase (RNR), probably by providing electrons for reduction during radical cofactor maturation in the catalytic small subunit. This is Anamorsin homolog 1 from Paramecium tetraurelia.